Consider the following 501-residue polypeptide: Cytochrome P450 2J5 (501 aa).

Cysteine 447 is a binding site for heme.

Belongs to the cytochrome P450 family. It depends on heme as a cofactor.

The protein resides in the endoplasmic reticulum membrane. Its subcellular location is the microsome membrane. It carries out the reaction an organic molecule + reduced [NADPH--hemoprotein reductase] + O2 = an alcohol + oxidized [NADPH--hemoprotein reductase] + H2O + H(+). The chain is Cytochrome P450 2J5 (Cyp2j5) from Mus musculus (Mouse).